Here is a 227-residue protein sequence, read N- to C-terminus: PKHD-type hydroxylase Bphy_5374 (227 aa).

Residues 79–179 form the Fe2OG dioxygenase domain; the sequence is KVYPPLFNRY…RVASFFWVQS (101 aa). Residues H97, D99, and H160 each contribute to the Fe cation site. R170 is a binding site for 2-oxoglutarate.

Requires Fe(2+) as cofactor. L-ascorbate is required as a cofactor.

The sequence is that of PKHD-type hydroxylase Bphy_5374 from Paraburkholderia phymatum (strain DSM 17167 / CIP 108236 / LMG 21445 / STM815) (Burkholderia phymatum).